The following is a 315-amino-acid chain: Phosphatidylglycerol--prolipoprotein diacylglyceryl transferase (315 aa).

2 helical membrane-spanning segments follow: residues 19–39 and 93–113; these read FTIH…VWIL and VWEG…VAFL. Arg141 provides a ligand contact to a 1,2-diacyl-sn-glycero-3-phospho-(1'-sn-glycerol). Helical transmembrane passes span 188 to 208 and 256 to 276; these read LFHP…ALII and VWTA…LYQY.

This sequence belongs to the Lgt family.

It localises to the cell membrane. It catalyses the reaction L-cysteinyl-[prolipoprotein] + a 1,2-diacyl-sn-glycero-3-phospho-(1'-sn-glycerol) = an S-1,2-diacyl-sn-glyceryl-L-cysteinyl-[prolipoprotein] + sn-glycerol 1-phosphate + H(+). It functions in the pathway protein modification; lipoprotein biosynthesis (diacylglyceryl transfer). Catalyzes the transfer of the diacylglyceryl group from phosphatidylglycerol to the sulfhydryl group of the N-terminal cysteine of a prolipoprotein, the first step in the formation of mature lipoproteins. In Bifidobacterium longum (strain DJO10A), this protein is Phosphatidylglycerol--prolipoprotein diacylglyceryl transferase.